The following is a 245-amino-acid chain: tRNA pseudouridine synthase A (245 aa).

Catalysis depends on Asp52, which acts as the Nucleophile. Tyr111 lines the substrate pocket.

The protein belongs to the tRNA pseudouridine synthase TruA family. In terms of assembly, homodimer.

It catalyses the reaction uridine(38/39/40) in tRNA = pseudouridine(38/39/40) in tRNA. Its function is as follows. Formation of pseudouridine at positions 38, 39 and 40 in the anticodon stem and loop of transfer RNAs. The sequence is that of tRNA pseudouridine synthase A from Wolbachia sp. subsp. Drosophila simulans (strain wRi).